The primary structure comprises 549 residues: Cation/acetate symporter ActP (549 aa).

13 helical membrane-spanning segments follow: residues 33-53, 77-97, 103-123, 148-168, 183-203, 206-226, 262-282, 303-323, 355-375, 404-424, 428-448, 464-484, and 493-513; these read WQAI…TYWA, LAIA…ALVF, GLIY…LIAE, ILSA…QMVG, IAVV…GMLA, WVQI…AFMV, ISAL…PHIL, GFMG…IMLV, LFLG…VAGL, VSKI…VLFE, IAFM…PIIL, GGWL…TIWV, and IFPY…GIWF.

It belongs to the sodium:solute symporter (SSF) (TC 2.A.21) family.

Its subcellular location is the cell inner membrane. Its function is as follows. Transports acetate. The sequence is that of Cation/acetate symporter ActP from Escherichia fergusonii (strain ATCC 35469 / DSM 13698 / CCUG 18766 / IAM 14443 / JCM 21226 / LMG 7866 / NBRC 102419 / NCTC 12128 / CDC 0568-73).